A 193-amino-acid chain; its full sequence is Peptidyl-tRNA hydrolase (193 aa).

Position 14 (Tyr14) interacts with tRNA. Catalysis depends on His19, which acts as the Proton acceptor. Phe64, Asn66, and Asn112 together coordinate tRNA.

This sequence belongs to the PTH family. Monomer.

The protein localises to the cytoplasm. The enzyme catalyses an N-acyl-L-alpha-aminoacyl-tRNA + H2O = an N-acyl-L-amino acid + a tRNA + H(+). Hydrolyzes ribosome-free peptidyl-tRNAs (with 1 or more amino acids incorporated), which drop off the ribosome during protein synthesis, or as a result of ribosome stalling. In terms of biological role, catalyzes the release of premature peptidyl moieties from peptidyl-tRNA molecules trapped in stalled 50S ribosomal subunits, and thus maintains levels of free tRNAs and 50S ribosomes. This is Peptidyl-tRNA hydrolase from Bartonella quintana (strain Toulouse) (Rochalimaea quintana).